Reading from the N-terminus, the 862-residue chain is Switch 2 (862 aa).

2 disordered regions span residues 13-43 and 58-95; these read PCGS…SSLS and KHES…DDER. Over residues 16-27 the composition is skewed to low complexity; the sequence is SFPSSSSLRVSS. The span at 58-84 shows a compositional bias: basic and acidic residues; sequence KHESKISKTQVEDFDHNEDDHKRNIKF. The span at 85–95 shows a compositional bias: acidic residues; the sequence is DEEEVDEDDER. One can recognise a Helicase ATP-binding domain in the interval 151 to 323; that stretch reads YNLYKNNHGG…FNLFEWVAPG (173 aa). An ATP-binding site is contributed by 164-171; it reads DDMGLGKT. The short motif at 274–277 is the DEAH box element; sequence DEAH. Residues 274–294 adopt a coiled-coil conformation; the sequence is DEAHRLKNEKSKLYEACLEIK. The Helicase C-terminal domain maps to 532–685; sequence ALEKLMASWI…VAGKMETRYF (154 aa). The span at 782–793 shows a compositional bias: polar residues; sequence TTSTSQRLNGDG. The disordered stretch occupies residues 782-821; that stretch reads TTSTSQRLNGDGNSADRKKKKRKGCSEEEDMSSSNREQKR.

It belongs to the SNF2/RAD54 helicase family.

Its function is as follows. May be involved in early DNA damage response. Probable chromatin remodeling factor. The chain is Switch 2 from Arabidopsis thaliana (Mouse-ear cress).